The primary structure comprises 1400 residues: DNA-directed RNA polymerase subunit beta' (1400 aa).

The Zn(2+) site is built by cysteine 71, cysteine 73, cysteine 86, and cysteine 89. Residues aspartate 462, aspartate 464, and aspartate 466 each coordinate Mg(2+). Zn(2+) is bound by residues cysteine 810, cysteine 884, cysteine 891, and cysteine 894.

Belongs to the RNA polymerase beta' chain family. In terms of assembly, the RNAP catalytic core consists of 2 alpha, 1 beta, 1 beta' and 1 omega subunit. When a sigma factor is associated with the core the holoenzyme is formed, which can initiate transcription. Mg(2+) is required as a cofactor. It depends on Zn(2+) as a cofactor.

It catalyses the reaction RNA(n) + a ribonucleoside 5'-triphosphate = RNA(n+1) + diphosphate. Its function is as follows. DNA-dependent RNA polymerase catalyzes the transcription of DNA into RNA using the four ribonucleoside triphosphates as substrates. In Rhodopseudomonas palustris (strain BisA53), this protein is DNA-directed RNA polymerase subunit beta'.